A 158-amino-acid polypeptide reads, in one-letter code: Anaerobic ribonucleoside-triphosphate reductase-activating protein (158 aa).

The [4Fe-4S] cluster site is built by cysteine 26, cysteine 30, and cysteine 33. S-adenosyl-L-methionine contacts are provided by residues 32 to 34 (GCY) and glycine 74.

The protein belongs to the organic radical-activating enzymes family. As to quaternary structure, forms a tetramer composed of two NrdD and two NrdG subunits. [4Fe-4S] cluster is required as a cofactor.

It is found in the cytoplasm. The enzyme catalyses glycyl-[protein] + reduced [flavodoxin] + S-adenosyl-L-methionine = glycin-2-yl radical-[protein] + semiquinone [flavodoxin] + 5'-deoxyadenosine + L-methionine + H(+). Activation of anaerobic ribonucleoside-triphosphate reductase under anaerobic conditions by generation of an organic free radical, using S-adenosylmethionine and reduced flavodoxin as cosubstrates to produce 5'-deoxy-adenosine. In Pasteurella multocida (strain Pm70), this protein is Anaerobic ribonucleoside-triphosphate reductase-activating protein (nrdG).